The sequence spans 185 residues: MINVNEFRPGITFEFENEIYVVISAQHSKQGRGQANVKTKVKNLRTGAITIKTFSGGERVEKAHIEKISMSFLYNDGESIVLMDDSTYEQVAIENTKITWELNFLTEGIKVKLRKFNNEILDIELPAKIELKITSTFDAVRGNTTTNPTKRATLETGYEIDVPLFIKEGESVIVSTEDGKYVSRG.

The protein belongs to the elongation factor P family.

The protein localises to the cytoplasm. It functions in the pathway protein biosynthesis; polypeptide chain elongation. In terms of biological role, involved in peptide bond synthesis. Stimulates efficient translation and peptide-bond synthesis on native or reconstituted 70S ribosomes in vitro. Probably functions indirectly by altering the affinity of the ribosome for aminoacyl-tRNA, thus increasing their reactivity as acceptors for peptidyl transferase. In Mesomycoplasma hyopneumoniae (strain 7448) (Mycoplasma hyopneumoniae), this protein is Elongation factor P.